We begin with the raw amino-acid sequence, 216 residues long: Probable nicotinate-nucleotide adenylyltransferase (216 aa).

This sequence belongs to the NadD family.

The catalysed reaction is nicotinate beta-D-ribonucleotide + ATP + H(+) = deamido-NAD(+) + diphosphate. It functions in the pathway cofactor biosynthesis; NAD(+) biosynthesis; deamido-NAD(+) from nicotinate D-ribonucleotide: step 1/1. Functionally, catalyzes the reversible adenylation of nicotinate mononucleotide (NaMN) to nicotinic acid adenine dinucleotide (NaAD). In Geobacter sulfurreducens (strain ATCC 51573 / DSM 12127 / PCA), this protein is Probable nicotinate-nucleotide adenylyltransferase.